We begin with the raw amino-acid sequence, 843 residues long: Beta-mannosidase B (843 aa).

Glutamate 432 (proton donor) is an active-site residue.

Belongs to the glycosyl hydrolase 2 family. Beta-mannosidase B subfamily.

The enzyme catalyses Hydrolysis of terminal, non-reducing beta-D-mannose residues in beta-D-mannosides.. The protein operates within glycan metabolism; N-glycan degradation. Its function is as follows. Exoglycosidase that cleaves the single beta-linked mannose residue from the non-reducing end of beta-mannosidic oligosaccharides of various complexity and length. Prefers mannobiose over mannotriose and has no activity against polymeric mannan. Is also severely restricted by galactosyl substitutions at the +1 subsite. Releases the terminal mannose residue from mannobiose, mannotriose and galactosyl-mannotriose (GM3), but not from galactosyl-mannobiose (GM2) or di-galactosyl-mannopentaose (G2M5). This Emericella nidulans (strain FGSC A4 / ATCC 38163 / CBS 112.46 / NRRL 194 / M139) (Aspergillus nidulans) protein is Beta-mannosidase B (mndB).